The sequence spans 390 residues: Probable purine permease 18 (390 aa).

Residues 1-14 show a composition bias toward polar residues; that stretch reads MEMTEASKQTTAEG. Positions 1–23 are disordered; it reads MEMTEASKQTTAEGSANPEPDQI. A Phosphoserine modification is found at Ser25. The next 10 helical transmembrane spans lie at 39–59, 81–101, 120–140, 148–168, 176–196, 211–231, 250–270, 297–317, 324–344, and 348–368; these read ISVS…MLLL, WLQA…FFIF, LILL…LFAL, GVFT…AAII, WIIL…PEFG, WLTF…QLCF, VIEM…VGLF, IGLA…VLYV, VVHM…FDFM, and FSWP…SYFY.

Belongs to the purine permeases (TC 2.A.7.14) family.

The protein localises to the membrane. The polypeptide is Probable purine permease 18 (PUP18) (Arabidopsis thaliana (Mouse-ear cress)).